The following is a 35-amino-acid chain: Cupiennin-2e (35 aa).

Glu-35 is modified (glutamic acid 1-amide).

Expressed by the venom gland.

Its subcellular location is the secreted. The chain is Cupiennin-2e from Cupiennius salei (American wandering spider).